The following is a 337-amino-acid chain: Glutathione transferase 3 (337 aa).

Residues Met1–Cys239 are Cytoplasmic-facing. Phosphoserine occurs at positions 66, 72, 99, and 116. The disordered stretch occupies residues Ser66–Ala95. Positions Lys107 to Asn132 are disordered. Polar residues predominate over residues Gly117–Asn132. The chain crosses the membrane as a helical span at residues Leu240–Ile260. Over Asn261–Thr313 the chain is Perinuclear space. The helical transmembrane segment at Val314–Val336 threads the bilayer. Residue Leu337 is a topological domain, cytoplasmic.

The protein localises to the nucleus membrane. This Saccharomyces cerevisiae (strain ATCC 204508 / S288c) (Baker's yeast) protein is Glutathione transferase 3 (GTT3).